The sequence spans 522 residues: MALMSQAGSSHCIYSEKMKCISGHSSITSNMEMLKMKDICFGNISSRNSSKPMQGIYLDRVGVERRRGRLAIVAASPPTEDAVVAAEPLTKEDLVAYLASGCKSKEKWRIGTEHEKFGFEFGTLRPMKYEQIAELLNGIAERFDWEKVMEGDNIIGLKQGKQSISLEPGGQFELSGAPLETLHQTCAEVNSHLYQVKAVAEEMGIGFLGTGFQPKWGLKDIPVMPKGRYEIMRNYMPKVGSLGLDMMFRTCTVQVNLDFSSEADMIRKFRAGLALQPIATALFANSPFTEGKPNGYLSMRSHIWTDTDNNRAGMLPFVFDDSFGFEQYVDYALDVPMYFVYRKKKYIDCAGMSFRDFMNGKLSPIPGDYPTLNDWENHLTTIFPEVRLKRYLEMRGADGGPWRRLCALPAFWVGILYDEVSLQTVLDMTSDWTAEEREMLRNKVPTSGLKTPFRDGLLKHVAQDVVKLAKEGLERRGYKETGFLNEVTEVVRTGVTPAEKLLELYHGKWGRSVDPVFEELLY.

Residues 1–45 constitute a chloroplast transit peptide; that stretch reads MALMSQAGSSHCIYSEKMKCISGHSSITSNMEMLKMKDICFGNIS. The cysteines at positions 186 and 406 are disulfide-linked.

This sequence belongs to the carboxylate-amine ligase family. Glutamate--cysteine ligase type 2 subfamily. Homodimer or monomer when oxidized or reduced, respectively. The Cys-186-Cys-406 disulfide bridge is known to modulate the enzyme activity according to the redox status. The oxidized form constitutes the active enzyme.

The protein localises to the plastid. Its subcellular location is the chloroplast. The enzyme catalyses L-cysteine + L-glutamate + ATP = gamma-L-glutamyl-L-cysteine + ADP + phosphate + H(+). The protein operates within sulfur metabolism; glutathione biosynthesis; glutathione from L-cysteine and L-glutamate: step 1/2. The protein is Glutamate--cysteine ligase, chloroplastic (GSH1) of Nicotiana tabacum (Common tobacco).